Here is a 287-residue protein sequence, read N- to C-terminus: Large ribosomal subunit protein uL2 (287 aa).

Residues 221-287 are disordered; that stretch reads RGSVMNPCDH…SKRSRGGRDS (67 aa). A compositionally biased stretch (basic residues) spans 258 to 287; sequence KTRKRNKPSNRFVLRKRRRTSKRSRGGRDS.

This sequence belongs to the universal ribosomal protein uL2 family. Part of the 50S ribosomal subunit. Forms a bridge to the 30S subunit in the 70S ribosome.

Its function is as follows. One of the primary rRNA binding proteins. Required for association of the 30S and 50S subunits to form the 70S ribosome, for tRNA binding and peptide bond formation. It has been suggested to have peptidyltransferase activity; this is somewhat controversial. Makes several contacts with the 16S rRNA in the 70S ribosome. In Prochlorococcus marinus (strain MIT 9303), this protein is Large ribosomal subunit protein uL2.